The following is a 293-amino-acid chain: N-acetylneuraminate lyase (293 aa).

Aceneuramate contacts are provided by serine 48 and serine 49. Tyrosine 137 serves as the catalytic Proton donor. Lysine 165 functions as the Schiff-base intermediate with substrate in the catalytic mechanism. Residues threonine 167, glycine 189, aspartate 191, glutamate 192, and serine 208 each coordinate aceneuramate.

This sequence belongs to the DapA family. NanA subfamily. As to quaternary structure, homotetramer.

The protein localises to the cytoplasm. It carries out the reaction aceneuramate = aldehydo-N-acetyl-D-mannosamine + pyruvate. The protein operates within amino-sugar metabolism; N-acetylneuraminate degradation; D-fructose 6-phosphate from N-acetylneuraminate: step 1/5. Its function is as follows. Catalyzes the reversible aldol cleavage of N-acetylneuraminic acid (sialic acid; Neu5Ac) to form pyruvate and N-acetylmannosamine (ManNAc) via a Schiff base intermediate. The protein is N-acetylneuraminate lyase of Staphylococcus aureus (strain Mu3 / ATCC 700698).